A 251-amino-acid chain; its full sequence is Probable transcriptional regulatory protein Amuc_0709 (251 aa).

The protein belongs to the TACO1 family.

Its subcellular location is the cytoplasm. The polypeptide is Probable transcriptional regulatory protein Amuc_0709 (Akkermansia muciniphila (strain ATCC BAA-835 / DSM 22959 / JCM 33894 / BCRC 81048 / CCUG 64013 / CIP 107961 / Muc)).